We begin with the raw amino-acid sequence, 319 residues long: Acetyl-coenzyme A carboxylase carboxyl transferase subunit alpha (319 aa).

The CoA carboxyltransferase C-terminal domain occupies 35–296 (NLDEEVQRLR…KAQLLADLAD (262 aa)).

Belongs to the AccA family. In terms of assembly, acetyl-CoA carboxylase is a heterohexamer composed of biotin carboxyl carrier protein (AccB), biotin carboxylase (AccC) and two subunits each of ACCase subunit alpha (AccA) and ACCase subunit beta (AccD).

It localises to the cytoplasm. It carries out the reaction N(6)-carboxybiotinyl-L-lysyl-[protein] + acetyl-CoA = N(6)-biotinyl-L-lysyl-[protein] + malonyl-CoA. It participates in lipid metabolism; malonyl-CoA biosynthesis; malonyl-CoA from acetyl-CoA: step 1/1. Its function is as follows. Component of the acetyl coenzyme A carboxylase (ACC) complex. First, biotin carboxylase catalyzes the carboxylation of biotin on its carrier protein (BCCP) and then the CO(2) group is transferred by the carboxyltransferase to acetyl-CoA to form malonyl-CoA. In Erwinia tasmaniensis (strain DSM 17950 / CFBP 7177 / CIP 109463 / NCPPB 4357 / Et1/99), this protein is Acetyl-coenzyme A carboxylase carboxyl transferase subunit alpha.